We begin with the raw amino-acid sequence, 71 residues long: Small ribosomal subunit protein bS21 (71 aa).

This sequence belongs to the bacterial ribosomal protein bS21 family.

In Shewanella piezotolerans (strain WP3 / JCM 13877), this protein is Small ribosomal subunit protein bS21.